The primary structure comprises 211 residues: Redox-sensing transcriptional repressor Rex (211 aa).

The H-T-H motif DNA-binding region spans 17–56; sequence LYYRFVSSLKSKGIDRVNSKAISDALQIDSATIRRDFSYF. 91 to 96 lines the NAD(+) pocket; that stretch reads GVGNLG.

This sequence belongs to the transcriptional regulatory Rex family. As to quaternary structure, homodimer.

The protein localises to the cytoplasm. Functionally, modulates transcription in response to changes in cellular NADH/NAD(+) redox state. The polypeptide is Redox-sensing transcriptional repressor Rex (Staphylococcus aureus (strain Mu3 / ATCC 700698)).